The primary structure comprises 235 residues: Probable flavin-dependent thymidylate synthase (235 aa).

Residues 1–229 form the ThyX domain; the sequence is MKVQLIASTI…PNTYQDIPTE (229 aa). Residues S70 and 93-95 each bind FAD; that span reads RHR. DUMP is bound by residues 90-93, 103-105, and R168; these read ELER and SQR. Residues 93 to 103 carry the ThyX motif motif; that stretch reads RHRHLSFSVVS. 184 to 186 lines the FAD pocket; sequence NHR. Residue R195 coordinates dUMP. R195 (involved in ionization of N3 of dUMP, leading to its activation) is an active-site residue.

The protein belongs to the thymidylate synthase ThyX family. Homotetramer. It depends on FAD as a cofactor.

It catalyses the reaction dUMP + (6R)-5,10-methylene-5,6,7,8-tetrahydrofolate + NADPH + H(+) = dTMP + (6S)-5,6,7,8-tetrahydrofolate + NADP(+). The protein operates within pyrimidine metabolism; dTTP biosynthesis. Catalyzes the reductive methylation of 2'-deoxyuridine-5'-monophosphate (dUMP) to 2'-deoxythymidine-5'-monophosphate (dTMP) while utilizing 5,10-methylenetetrahydrofolate (mTHF) as the methyl donor, and NADPH and FADH(2) as the reductant. This is Probable flavin-dependent thymidylate synthase (48) from Mycobacterium (Mycobacteriophage D29).